The sequence spans 176 residues: Urease accessory protein UreE (176 aa).

The disordered stretch occupies residues 134–176; sequence EAGAYGSGGHHHHGESSQGHAHGPLAPIPVHQKIHRPSDIPSR.

This sequence belongs to the UreE family.

Its subcellular location is the cytoplasm. Involved in urease metallocenter assembly. Binds nickel. Probably functions as a nickel donor during metallocenter assembly. The polypeptide is Urease accessory protein UreE (Nitrosospira multiformis (strain ATCC 25196 / NCIMB 11849 / C 71)).